The chain runs to 314 residues: MMGQNQTSISDFLLLGLPIQPEQQNLCYALFLAMYLTTLLGNLLIIVLIRLDSHLHTPMYLFLSNLSFSDLCFSSVTIPKLLQNMQNQDPSIPYADCLTQMYFFLLFGDLESFLLVAMAYDRYVAICFPLHYTAIMSPMLCLSVVALSWVLTTFHAMLHTLLMARLCFCADNVIPHFFCDMSALLKLACSDTRVNEWVIFIMGGLILVIPFLLILGSYARIVSSILKVPSSKGICKALSTCGSHLSVVSLFYGTVIGLYLCPSANSSTLKDTVMAMIYTVVTPMLNPFIYSLRNRDMKGALSRVIHQKKTFFSL.

Over 1-25 the chain is Extracellular; the sequence is MMGQNQTSISDFLLLGLPIQPEQQN. N-linked (GlcNAc...) asparagine glycosylation is present at asparagine 5. Residues 26 to 49 traverse the membrane as a helical segment; the sequence is LCYALFLAMYLTTLLGNLLIIVLI. Residues 50 to 57 lie on the Cytoplasmic side of the membrane; it reads RLDSHLHT. Residues 58–79 traverse the membrane as a helical segment; sequence PMYLFLSNLSFSDLCFSSVTIP. Over 80–100 the chain is Extracellular; it reads KLLQNMQNQDPSIPYADCLTQ. Cysteines 97 and 189 form a disulfide. A helical membrane pass occupies residues 101 to 120; the sequence is MYFFLLFGDLESFLLVAMAY. Topologically, residues 121–139 are cytoplasmic; that stretch reads DRYVAICFPLHYTAIMSPM. The helical transmembrane segment at 140–158 threads the bilayer; that stretch reads LCLSVVALSWVLTTFHAML. Residues 159–195 are Extracellular-facing; sequence HTLLMARLCFCADNVIPHFFCDMSALLKLACSDTRVN. A helical transmembrane segment spans residues 196 to 219; it reads EWVIFIMGGLILVIPFLLILGSYA. Topologically, residues 220–236 are cytoplasmic; it reads RIVSSILKVPSSKGICK. The chain crosses the membrane as a helical span at residues 237 to 259; it reads ALSTCGSHLSVVSLFYGTVIGLY. Over 260-272 the chain is Extracellular; the sequence is LCPSANSSTLKDT. Residues 273 to 292 form a helical membrane-spanning segment; it reads VMAMIYTVVTPMLNPFIYSL. Residues 293-314 are Cytoplasmic-facing; sequence RNRDMKGALSRVIHQKKTFFSL.

It belongs to the G-protein coupled receptor 1 family.

It localises to the cell membrane. Functionally, odorant receptor. The protein is Olfactory receptor 1E1 (OR1E1) of Pan troglodytes (Chimpanzee).